A 411-amino-acid chain; its full sequence is Protein-lysine 6-oxidase (411 aa).

The signal sequence occupies residues 1–21 (MRFAWTVLFLGQLQFCPLLRC). Residues 22-162 (APQAPREPPA…PPSHVDRMVG (141 aa)) constitute a propeptide, removed by BMP1. Positions 60 to 168 (PQRRRDSSAT…RMVGDDPYNP (109 aa)) are disordered. N-linked (GlcNAc...) asparagine glycosylation is found at Asn91 and Asn138. Tyr181 carries the post-translational modification Sulfotyrosine. A lysyl-oxidase like region spans residues 207 to 411 (PDLVPDPYYI…YASGCTISPY (205 aa)). Intrachain disulfides connect Cys232/Cys238, Cys285/Cys334, Cys318/Cys324, Cys345/Cys355, and Cys392/Cys406. Cu cation-binding residues include His286, His288, and His290. A cross-link (lysine tyrosylquinone (Lys-Tyr)) is located at residues 314–349 (KASFCLEDTSCDYGYHRRFACTAHTQGLSPGCYDTY). At Tyr349 the chain carries 2',4',5'-topaquinone.

It belongs to the lysyl oxidase family. In terms of assembly, interacts with MFAP4. Interacts (via propeptide) with EFEMP2; this interaction is strong and facilitates formation of ternary complexes with ELN during elastic fiber assembly; this interaction limits interaction of EFEMP2 with FBLN5. The cofactor is Cu cation. It depends on lysine tyrosylquinone residue as a cofactor. Post-translationally, the lysine tyrosylquinone cross-link (LTQ) is generated by condensation of the epsilon-amino group of a lysine with a topaquinone produced by oxidation of tyrosine. In terms of processing, proteolytically cleaved by BMP1 which removes the propeptide. Also proteolytically cleaved by ADAMTS2 and ADAMTS14, but not by ADAMTS3, at an additional cleavage site downstream of the BMP1 cleavage site. The propeptide plays a role in directing the deposition of this enzyme to elastic fibers, via interaction with tropoelastin. Cleavage by BMP1 to remove the propeptide does not increase enzymatic activity but increases binding to collagen. Cleavage by ADAMTS2 produces a form with reduced collagen-binding activity. Sulfated at Tyr-181 and also at either Tyr-177 or Tyr-178 which enhances binding to collagen. In terms of tissue distribution, aorta and lung.

It is found in the secreted. It localises to the extracellular space. It catalyses the reaction L-lysyl-[protein] + O2 + H2O = (S)-2-amino-6-oxohexanoyl-[protein] + H2O2 + NH4(+). Responsible for the post-translational oxidative deamination of peptidyl lysine residues in precursors to fibrous collagen and elastin. Regulator of Ras expression. May play a role in tumor suppression. Plays a role in the aortic wall architecture. This chain is Protein-lysine 6-oxidase, found in Rattus norvegicus (Rat).